A 513-amino-acid polypeptide reads, in one-letter code: ATP synthase subunit alpha (513 aa).

169-176 (GDRQCGKT) provides a ligand contact to ATP.

This sequence belongs to the ATPase alpha/beta chains family. In terms of assembly, F-type ATPases have 2 components, CF(1) - the catalytic core - and CF(0) - the membrane proton channel. CF(1) has five subunits: alpha(3), beta(3), gamma(1), delta(1), epsilon(1). CF(0) has three main subunits: a(1), b(2) and c(9-12). The alpha and beta chains form an alternating ring which encloses part of the gamma chain. CF(1) is attached to CF(0) by a central stalk formed by the gamma and epsilon chains, while a peripheral stalk is formed by the delta and b chains.

The protein localises to the cell inner membrane. The enzyme catalyses ATP + H2O + 4 H(+)(in) = ADP + phosphate + 5 H(+)(out). Its function is as follows. Produces ATP from ADP in the presence of a proton gradient across the membrane. The alpha chain is a regulatory subunit. This chain is ATP synthase subunit alpha, found in Burkholderia mallei (strain NCTC 10229).